The primary structure comprises 557 residues: MAAAGGAALWRRLAAWLPRGPPGLAALLGRLSDRLSRGRDRRSRRSSWLLLAPLLTPPVPVITAMPCSLCPEGAHRFQWIRNLVPEFGISSSHVKVLSSPAEFYELLKVQIKTAKQRVVMASLYLGTGLLEQELVNCLEETLEKSLQANESPNLRVSILLDYTRGSRGRKNSRTMLIPLLQRFPEQVRVSLFHTPNLRGLLKLLIPERFNETIGLQHIKVYLFDDNVILSGANLSDLYFTNRQDRYVLLQDSPEIADFFTELVDAIGDVSLQLQQDDTVQMMEGMVHPYQGDKVRYCEIANQRVMEVIDSARTRQELLHAKTFHSSQQGSSMLPQHDSEASEGLKPEPDTWIYPLIQMKPFGIQIDEMVTETLLTEAERDAKIYLTTGYFNLTQAYMDLILGTRAEYRILLASPEVNGFFGAKGVAGAIPSAYVYIEHQFYNEVCCLHQQERVQLQEYSRAGWTFHAKGLWLYLAGSSLPCLTLIGSPNFGYRSVHRDLEAQVAIVTENKALQQQLHQEQEQLYLCSGVVSSSTFEQPSRHVKLWVKLVTPLIKNFF.

The transit peptide at 1 to 25 (MAAAGGAALWRRLAAWLPRGPPGLA) directs the protein to the mitochondrion. 121–128 (ASLYLGTG) serves as a coordination point for ATP. Residues 212 to 238 (TIGLQHIKVYLFDDNVILSGANLSDLY) form the PLD phosphodiesterase 1 domain. Active-site residues include H217, K219, and D224. Residues 322-346 (TFHSSQQGSSMLPQHDSEASEGLKP) are disordered. Residues 323–333 (FHSSQQGSSML) show a composition bias toward polar residues. The segment covering 336-346 (HDSEASEGLKP) has biased composition (basic and acidic residues). Residues 461–494 (AGWTFHAKGLWLYLAGSSLPCLTLIGSPNFGYRS) enclose the PLD phosphodiesterase 2 domain.

Belongs to the CDP-alcohol phosphatidyltransferase class-II family.

Its subcellular location is the mitochondrion. It carries out the reaction a CDP-1,2-diacyl-sn-glycerol + sn-glycerol 3-phosphate = a 1,2-diacyl-sn-glycero-3-phospho-(1'-sn-glycero-3'-phosphate) + CMP + H(+). It participates in phospholipid metabolism; phosphatidylglycerol biosynthesis; phosphatidylglycerol from CDP-diacylglycerol: step 1/2. Activated by calcium and magnesium and inhibited by other bivalent cations. In terms of biological role, functions in the biosynthesis of the anionic phospholipids phosphatidylglycerol and cardiolipin. In Gallus gallus (Chicken), this protein is CDP-diacylglycerol--glycerol-3-phosphate 3-phosphatidyltransferase, mitochondrial (PGS1).